The primary structure comprises 201 residues: Small ribosomal subunit protein uS4 (201 aa).

The S4 RNA-binding domain maps to 91 to 155 (TRLDNVVYRA…STLPFQVARE (65 aa)).

The protein belongs to the universal ribosomal protein uS4 family. In terms of assembly, part of the 30S ribosomal subunit. Contacts protein S5. The interaction surface between S4 and S5 is involved in control of translational fidelity.

In terms of biological role, one of the primary rRNA binding proteins, it binds directly to 16S rRNA where it nucleates assembly of the body of the 30S subunit. With S5 and S12 plays an important role in translational accuracy. The polypeptide is Small ribosomal subunit protein uS4 (Nocardia farcinica (strain IFM 10152)).